A 536-amino-acid chain; its full sequence is MQNGKRRIGVRISSNLSNHSGTNLSTSAQSDSSNIVKATECPICGLELPNLSALNDHLDVTHFNDNEKIHKRQDSINSWLTRTLNGASALQMKAAQRLWRMEPYEQNGDSSGAVGLEATKLTDSLVVKNHWQPEVPDMVCHDPMCDKLLNFINGHIHCRKCGYIFCNFHSMYQIKLSIHATYDSENGFWCRVCRECYEGRPGYNDSNGLIRSRFQTFETFRKPLADKRRIEFLRLSKRMKKLEELWTSENVSMLDALLLNKAKRLEQSIVHWQDDSVVQICPECNNSFTLTRRRRHCRLCGRVICRFCVLEISLPQHPQPLLICMSCNQNYFRNVLYQTERSKSLGYIRHIEHLQVFRQAMVNYYRLYEDSLSELLSGEIITEATLKIVKDRRKKFLELCVKYDGTMKKIANHPSSNDAEEQFKQNVVNEAKRYLQETILRLQAIPYHLQVGQAWTSESERELEKKKEQVEKKQEELMQTRIVLEEQVFLVENMIEDAKAKRKFSEVETLLSSLAPLHEEIHSITEKIHDLDLFDI.

Positions 1–31 are disordered; sequence MQNGKRRIGVRISSNLSNHSGTNLSTSAQSD. Over residues 12 to 31 the composition is skewed to polar residues; sequence ISSNLSNHSGTNLSTSAQSD. A C2H2-type zinc finger spans residues 39–62; sequence TECPICGLELPNLSALNDHLDVTH. The FYVE-type 1; degenerate zinc finger occupies 136–201; the sequence is PDMVCHDPMC…VCRECYEGRP (66 aa). Residues Cys158, Cys161, Cys193, Cys196, Cys281, Cys284, Cys297, Cys300, Cys305, Cys308, Cys324, and Cys327 each contribute to the Zn(2+) site. An FYVE-type 2 zinc finger spans residues 275-332; that stretch reads DSVVQICPECNNSFTLTRRRRHCRLCGRVICRFCVLEISLPQHPQPLLICMSCNQNYF.

Its function is as follows. Required for vacuole segregation and vacuole protein sorting. Possibly part of a complex which tethers the vacuole membrane to microtubules, either directly or via kinesin or dynein-like motor proteins. Probably functions in several interorganelle traffic pathways. This is Vacuolar segregation protein pep7 (pep7) from Schizosaccharomyces pombe (strain 972 / ATCC 24843) (Fission yeast).